Here is a 922-residue protein sequence, read N- to C-terminus: MSDYKSSLNLPATQFPMKANLANREGGFLKKWQNDGLYDQIRQQNQGKPKFVLHDGPPYANGDIHIGHTVNKVLKDMIVKSKSLSGFDAPYVPGWDCHGLPIEFNVEKKYGKVGVKIDASTFRSKCRKYADQQVLKQKQDFQRLGILSDWDNPYLTKDFQYESDIVRALGRIVKNGHVSKGYKPVHWCTECGSALAETEVEYKDNQSEAIDVKFRIIDDSVFNMNKPVSVVIWTTTPWTLPANEAVALHPELNYVLVDIGDEYLLLAQALVETSISRYGIEATIGEQTFSGSELEGLKIKHPFYDKQVPIILGEYVTIDAGTGAVHTAPAHGQEDFIVGLKYNLPVECLVDIKGVFFKETELLGGQFIFKANDSVIEILKQANTLVKHESLMHSYPHCWRHKTPVIFRATPQWFISMQKNGLIDTVNREISKVQWMPDWGKKRIELMMDSRPDWCISRQRFWGVPITLFVHKQTGELHPNTQALFVSIANRIEKEGIEAWFKSDAQDFIGNDANDYDKTTDILDVWFDSGVSHFTVLKARKELSNVADLYLEGADQHRGWFQLSLISSVAINGKAPYKNVLTHGFVVDKNGKKMSKSLGNVMSPQKIVNNLGADVLRLWIASTDYTSEMTVGDEILKRSADSYRRIRNTMRFMLANMQAFNPVEHLLDNKQMLDLDKWIVAKTANLQTQIIKAYEQYNFHHVVQLILNFCSNDLGGFYLDVIKDRQYTTQANSLARRSAQSALHHITEAMVRWLAPILSFTAEEIWQNMPSEKNTSIFLASWYQDLTFGYENKAIDITREISPFIRKQMEGMRGEKIIGSSLESEIDIYCETDIFSTLSQLDDELRFIFITSYIRIHSLNEKNDDCIKAIEGVFIKVSKSRHEKCVRCWHHREDVGNNAKHPELCGRCVENVDGKGEIRKFA.

The 'HIGH' region motif lies at 58–68 (PYANGDIHIGH). Glu552 is an L-isoleucyl-5'-AMP binding site. The short motif at 593–597 (KMSKS) is the 'KMSKS' region element. ATP is bound at residue Lys596. Zn(2+) contacts are provided by Cys885, Cys888, Cys905, and Cys908.

It belongs to the class-I aminoacyl-tRNA synthetase family. IleS type 1 subfamily. In terms of assembly, monomer. Zn(2+) is required as a cofactor.

It is found in the cytoplasm. The catalysed reaction is tRNA(Ile) + L-isoleucine + ATP = L-isoleucyl-tRNA(Ile) + AMP + diphosphate. Its function is as follows. Catalyzes the attachment of isoleucine to tRNA(Ile). As IleRS can inadvertently accommodate and process structurally similar amino acids such as valine, to avoid such errors it has two additional distinct tRNA(Ile)-dependent editing activities. One activity is designated as 'pretransfer' editing and involves the hydrolysis of activated Val-AMP. The other activity is designated 'posttransfer' editing and involves deacylation of mischarged Val-tRNA(Ile). The chain is Isoleucine--tRNA ligase from Ruthia magnifica subsp. Calyptogena magnifica.